Here is a 176-residue protein sequence, read N- to C-terminus: Gamma-crystallin M2 (176 aa).

2 consecutive Beta/gamma crystallin 'Greek key' domains span residues 2–40 and 41–83; these read GKVIFYEDRNFQGRHYECSSDCADLSPYFSRCNSIRVEG and GCWV…RIIP. Positions 84-88 are connecting peptide; sequence QYRGS. 2 consecutive Beta/gamma crystallin 'Greek key' domains span residues 89–129 and 130–172; these read YRMR…HVMD and GYWI…RRIM.

It belongs to the beta/gamma-crystallin family. As to quaternary structure, monomer.

In terms of biological role, crystallins are the dominant structural components of the vertebrate eye lens. This is Gamma-crystallin M2 (GM2) from Chiloscyllium indicum (Slender bamboo shark).